A 246-amino-acid polypeptide reads, in one-letter code: DNA repair protein RecO (246 aa).

Belongs to the RecO family.

Functionally, involved in DNA repair and RecF pathway recombination. The polypeptide is DNA repair protein RecO (Cutibacterium acnes (strain DSM 16379 / KPA171202) (Propionibacterium acnes)).